The primary structure comprises 210 residues: Uridine kinase (210 aa).

12–19 contacts ATP; that stretch reads GGSGSGKT.

It belongs to the uridine kinase family.

The protein localises to the cytoplasm. It catalyses the reaction uridine + ATP = UMP + ADP + H(+). The enzyme catalyses cytidine + ATP = CMP + ADP + H(+). It functions in the pathway pyrimidine metabolism; CTP biosynthesis via salvage pathway; CTP from cytidine: step 1/3. The protein operates within pyrimidine metabolism; UMP biosynthesis via salvage pathway; UMP from uridine: step 1/1. The sequence is that of Uridine kinase from Bacillus pumilus (strain SAFR-032).